Reading from the N-terminus, the 1035-residue chain is Beta-galactosidase (1035 aa).

The substrate site is built by Asn-109 and Asp-208. Asp-208 provides a ligand contact to Na(+). Mg(2+) is bound by residues Glu-424, His-426, and Glu-469. Substrate is bound by residues Glu-469 and Glu-545–His-548. Glu-469 functions as the Proton donor in the catalytic mechanism. The Nucleophile role is filled by Glu-545. Mg(2+) is bound at residue Asn-605. Positions 609 and 612 each coordinate Na(+). 2 residues coordinate substrate: Asn-612 and Trp-1011.

It belongs to the glycosyl hydrolase 2 family. In terms of assembly, homotetramer. It depends on Mg(2+) as a cofactor. Na(+) is required as a cofactor.

The catalysed reaction is Hydrolysis of terminal non-reducing beta-D-galactose residues in beta-D-galactosides.. The protein is Beta-galactosidase of Klebsiella pneumoniae (strain 342).